Consider the following 213-residue polypeptide: Uridine kinase (213 aa).

15–22 (GASASGKS) contacts ATP.

It belongs to the uridine kinase family.

It localises to the cytoplasm. The catalysed reaction is uridine + ATP = UMP + ADP + H(+). It catalyses the reaction cytidine + ATP = CMP + ADP + H(+). Its pathway is pyrimidine metabolism; CTP biosynthesis via salvage pathway; CTP from cytidine: step 1/3. The protein operates within pyrimidine metabolism; UMP biosynthesis via salvage pathway; UMP from uridine: step 1/1. The protein is Uridine kinase of Salmonella newport (strain SL254).